The chain runs to 437 residues: Elongation factor 1-gamma (437 aa).

N-acetylalanine is present on A2. The GST N-terminal domain maps to 2 to 87 (AAGTLYTYPE…YVSNEELRGS (86 aa)). Positions 88 to 216 (TPEAAAQVVQ…VKLCEKMAQF (129 aa)) constitute a GST C-terminal domain. An N6-acetyllysine mark is found at K147 and K212. Over residues 221 to 254 (FAETQPKKDTPRKEKGSREEKQKPQAERKEEKKA) the composition is skewed to basic and acidic residues. Residues 221 to 268 (FAETQPKKDTPRKEKGSREEKQKPQAERKEEKKAAAPAPEEEMDECEQ) are disordered. K253 is covalently cross-linked (Glycyl lysine isopeptide (Lys-Gly) (interchain with G-Cter in SUMO1)). One can recognise an EF-1-gamma C-terminal domain in the interval 276-437 (AKDPFAHLPK…KAFNQGKIFK (162 aa)). K285 is covalently cross-linked (Glycyl lysine isopeptide (Lys-Gly) (interchain with G-Cter in SUMO2)). K401 is subject to N6-acetyllysine. The residue at position 434 (K434) is an N6-acetyllysine; alternate. K434 bears the N6-malonyllysine; alternate mark.

EF-1 is composed of four subunits: alpha, beta, delta, and gamma. As to expression, highly expressed in pancreatic tumor tissue and to a lesser extent in normal kidney, intestine, pancreas, stomach, lung, brain, spleen and liver.

In terms of biological role, probably plays a role in anchoring the complex to other cellular components. This is Elongation factor 1-gamma (EEF1G) from Homo sapiens (Human).